We begin with the raw amino-acid sequence, 402 residues long: Phosphoglycerate kinase (402 aa).

Residues 24–26 (DFN), R40, 63–66 (HFGR), R122, and R155 contribute to the substrate site. ATP contacts are provided by residues K206, G297, E328, and 357–360 (GGDS).

The protein belongs to the phosphoglycerate kinase family. In terms of assembly, monomer.

Its subcellular location is the cytoplasm. The enzyme catalyses (2R)-3-phosphoglycerate + ATP = (2R)-3-phospho-glyceroyl phosphate + ADP. The protein operates within carbohydrate degradation; glycolysis; pyruvate from D-glyceraldehyde 3-phosphate: step 2/5. The chain is Phosphoglycerate kinase from Synechococcus sp. (strain WH7803).